The chain runs to 787 residues: Integrin beta-6 (787 aa).

Positions 1 to 21 (MGIELVCLFLLLLGRNDHVQG) are cleaved as a signal peptide. The PSI domain occupies 22–71 (GCAWGGAESCSDCLLTGPHCAWCSQENFTHLSGAGERCDTPANLLAKGCQ). Residues 22-708 (GCAWGGAESC…KDCPKPPNIP (687 aa)) are Extracellular-facing. Disulfide bonds link Cys-23/Cys-41, Cys-31/Cys-454, Cys-34/Cys-59, Cys-44/Cys-70, Cys-197/Cys-204, Cys-252/Cys-293, Cys-394/Cys-406, Cys-426/Cys-452, Cys-456/Cys-476, Cys-467/Cys-479, Cys-481/Cys-490, Cys-492/Cys-519, Cys-502/Cys-517, Cys-511/Cys-522, Cys-524/Cys-537, Cys-539/Cys-560, Cys-544/Cys-558, Cys-552/Cys-563, and Cys-565/Cys-574. Residues Asn-48 and Asn-97 are each glycosylated (N-linked (GlcNAc...) asparagine). The VWFA domain maps to 131 to 371 (YPVDLYYLMD…QLIISAYEEL (241 aa)). Positions 140, 142, and 144 each coordinate Mg(2+). Ca(2+) contacts are provided by Ser-144, Asp-147, Asp-148, and Glu-179. Ca(2+)-binding residues include Asn-235, Asp-237, Pro-239, and Glu-240. Residue Glu-240 coordinates Mg(2+). N-linked (GlcNAc...) asparagine glycosylation occurs at Asn-260. Residues Asp-271 and Lys-355 each coordinate Ca(2+). Asn-387 carries an N-linked (GlcNAc...) asparagine glycan. Asn-418 carries an N-linked (GlcNAc...) asparagine glycan. I-EGF domains follow at residues 456 to 491 (CQREIETNSSKCHNGNGSFQCGVCTCNPGHMGPHCE), 492 to 538 (CGED…PYCQ), 539 to 575 (CDNFSCLRHKGLLCGDNGDCDCGECVCRDGWTGEYCN), and 576 to 615 (CTTNRDSCTSEDGVLCSGRGDCVCGKCVCRNPGASGPTCE). 2 N-linked (GlcNAc...) asparagine glycosylation sites follow: Asn-463 and Asn-471. N-linked (GlcNAc...) asparagine glycosylation is present at Asn-541. N-linked (GlcNAc...) asparagine glycosylation occurs at Asn-575. Intrachain disulfides connect Cys-576/Cys-599, Cys-583/Cys-597, Cys-591/Cys-602, Cys-604/Cys-614, Cys-617/Cys-620, Cys-624/Cys-669, Cys-630/Cys-649, Cys-633/Cys-645, and Cys-677/Cys-701. A helical transmembrane segment spans residues 709–729 (MIMLGVSLAILLIGVVLLCIW). The segment at 730–757 (KLLVSFHDRKEVAKFEAERSKAKWQTGT) is interaction with HAX1. At 730-787 (KLLVSFHDRKEVAKFEAERSKAKWQTGTNPLYRGSTSTFKNVTYKHREKHKAGLSSDG) the chain is on the cytoplasmic side.

The protein belongs to the integrin beta chain family. As to quaternary structure, heterodimer of an alpha and a beta subunit. Interacts with FLNB. Interacts with HAX1. ITGAV:ITGB6 interacts with FBN1. ITGAV:ITGB6 interacts with TGFB1.

Its subcellular location is the cell membrane. The protein localises to the cell junction. It localises to the focal adhesion. Integrin alpha-V:beta-6 (ITGAV:ITGB6) is a receptor for fibronectin and cytotactin. It recognizes the sequence R-G-D in its ligands. ITGAV:ITGB6 acts as a receptor for fibrillin-1 (FBN1) and mediates R-G-D-dependent cell adhesion to FBN1. Integrin alpha-V:beta-6 (ITGAV:ITGB6) mediates R-G-D-dependent release of transforming growth factor beta-1 (TGF-beta-1) from regulatory Latency-associated peptide (LAP), thereby playing a key role in TGF-beta-1 activation. This Mus musculus (Mouse) protein is Integrin beta-6 (Itgb6).